A 307-amino-acid polypeptide reads, in one-letter code: Quinolinate synthase (307 aa).

The iminosuccinate site is built by His20 and Ser37. Position 82 (Cys82) interacts with [4Fe-4S] cluster. Residues 108–110 (YIN) and Ser125 contribute to the iminosuccinate site. [4Fe-4S] cluster is bound at residue Cys168. Iminosuccinate-binding positions include 194 to 196 (HPE) and Thr219. Cys264 is a binding site for [4Fe-4S] cluster.

It belongs to the quinolinate synthase family. Type 2 subfamily. Requires [4Fe-4S] cluster as cofactor.

The protein resides in the cytoplasm. It catalyses the reaction iminosuccinate + dihydroxyacetone phosphate = quinolinate + phosphate + 2 H2O + H(+). It participates in cofactor biosynthesis; NAD(+) biosynthesis; quinolinate from iminoaspartate: step 1/1. In terms of biological role, catalyzes the condensation of iminoaspartate with dihydroxyacetone phosphate to form quinolinate. The chain is Quinolinate synthase from Pyrobaculum aerophilum (strain ATCC 51768 / DSM 7523 / JCM 9630 / CIP 104966 / NBRC 100827 / IM2).